The primary structure comprises 633 residues: DNA mismatch repair protein MutL (633 aa).

Residues 338–407 (AAPEPERTLP…VPPPTLRAIP (70 aa)) form a disordered region. Over residues 366–391 (PGSAFPAAARPAPASSAAQPPLSSSA) the composition is skewed to low complexity.

The protein belongs to the DNA mismatch repair MutL/HexB family.

Functionally, this protein is involved in the repair of mismatches in DNA. It is required for dam-dependent methyl-directed DNA mismatch repair. May act as a 'molecular matchmaker', a protein that promotes the formation of a stable complex between two or more DNA-binding proteins in an ATP-dependent manner without itself being part of a final effector complex. This is DNA mismatch repair protein MutL from Akkermansia muciniphila (strain ATCC BAA-835 / DSM 22959 / JCM 33894 / BCRC 81048 / CCUG 64013 / CIP 107961 / Muc).